Reading from the N-terminus, the 744-residue chain is CCR4-NOT transcription complex subunit 10 (744 aa).

A compositionally biased stretch (basic and acidic residues) spans 1–16; that stretch reads MAADKPADQGAEKHEG. Disordered stretches follow at residues 1–26, 183–204, 475–522, and 602–632; these read MAAD…VTDQ, SGNK…SNPK, EQQD…PSSP, and VSLG…RAPQ. N-acetylalanine is present on Ala-2. Residues 183–200 show a composition bias toward polar residues; that stretch reads SGNKNGKSETGNNSSKDG. Over residues 496-506 the composition is skewed to low complexity; it reads ESSESSETCSS. Polar residues predominate over residues 602-612; it reads VSLGISSNEQD.

Belongs to the CNOT10 family. In terms of assembly, component of the CCR4-NOT complex; distinct complexes seem to exist that differ in the participation of probably mutually exclusive catalytic subunits. CNOT10 and CNOT11 form a subcomplex docked to the CNOT1 scaffold.

The protein resides in the cytoplasm. The protein localises to the nucleus. Its function is as follows. Component of the CCR4-NOT complex which is one of the major cellular mRNA deadenylases and is linked to various cellular processes including bulk mRNA degradation, miRNA-mediated repression, translational repression during translational initiation and general transcription regulation. Additional complex functions may be a consequence of its influence on mRNA expression. Is not required for association of CNOT7 to the CCR4-NOT complex. The sequence is that of CCR4-NOT transcription complex subunit 10 (Cnot10) from Rattus norvegicus (Rat).